The following is a 429-amino-acid chain: Glutamate dehydrogenase B (429 aa).

The disordered stretch occupies residues 1-20; the sequence is MAQTPPPESAPSTDSEPETA. The active site involves lysine 119.

It belongs to the Glu/Leu/Phe/Val dehydrogenases family. Homohexamer.

The chain is Glutamate dehydrogenase B (gdhB) from Halobacterium salinarum (strain ATCC 700922 / JCM 11081 / NRC-1) (Halobacterium halobium).